Here is a 254-residue protein sequence, read N- to C-terminus: Small ribosomal subunit protein uS3 (254 aa).

Residues 38 to 106 (IRKYVLARIP…DVQINIFEIK (69 aa)) form the KH type-2 domain. A compositionally biased stretch (low complexity) spans 215–238 (NVGNAASGASSSSNNDNASPNQGG). Residues 215–254 (NVGNAASGASSSSNNDNASPNQGGPRRKRGGEGNRKKSNK) are disordered. Residues 244 to 254 (GGEGNRKKSNK) are compositionally biased toward basic and acidic residues.

This sequence belongs to the universal ribosomal protein uS3 family. In terms of assembly, part of the 30S ribosomal subunit. Forms a tight complex with proteins S10 and S14.

Functionally, binds the lower part of the 30S subunit head. Binds mRNA in the 70S ribosome, positioning it for translation. The chain is Small ribosomal subunit protein uS3 from Cytophaga hutchinsonii (strain ATCC 33406 / DSM 1761 / CIP 103989 / NBRC 15051 / NCIMB 9469 / D465).